A 331-amino-acid polypeptide reads, in one-letter code: tRNA uridine(34) hydroxylase (331 aa).

In terms of domain architecture, Rhodanese spans K122–W218. The active-site Cysteine persulfide intermediate is C178.

The protein belongs to the TrhO family.

It carries out the reaction uridine(34) in tRNA + AH2 + O2 = 5-hydroxyuridine(34) in tRNA + A + H2O. Functionally, catalyzes oxygen-dependent 5-hydroxyuridine (ho5U) modification at position 34 in tRNAs. In Chlamydia caviae (strain ATCC VR-813 / DSM 19441 / 03DC25 / GPIC) (Chlamydophila caviae), this protein is tRNA uridine(34) hydroxylase.